Consider the following 315-residue polypeptide: Transaldolase (315 aa).

K125 (schiff-base intermediate with substrate) is an active-site residue.

Belongs to the transaldolase family. Type 1 subfamily. Homodimer.

It is found in the cytoplasm. It catalyses the reaction D-sedoheptulose 7-phosphate + D-glyceraldehyde 3-phosphate = D-erythrose 4-phosphate + beta-D-fructose 6-phosphate. It participates in carbohydrate degradation; pentose phosphate pathway; D-glyceraldehyde 3-phosphate and beta-D-fructose 6-phosphate from D-ribose 5-phosphate and D-xylulose 5-phosphate (non-oxidative stage): step 2/3. Its function is as follows. Transaldolase is important for the balance of metabolites in the pentose-phosphate pathway. The protein is Transaldolase of Polaromonas naphthalenivorans (strain CJ2).